Reading from the N-terminus, the 118-residue chain is MICOS complex subunit MIC13 (118 aa).

Residues 1–7 (MVARVWS) are Mitochondrial matrix-facing. The helical transmembrane segment at 8–26 (LMRFLIKGSVAGGAVYLVY) threads the bilayer. The Mitochondrial intermembrane portion of the chain corresponds to 27–118 (DQELLGPSDK…GWEYVKARTK (92 aa)).

This sequence belongs to the MICOS complex subunit Mic13 family. In terms of assembly, component of the mitochondrial contact site and cristae organizing system (MICOS) complex, composed of at least MICOS10/MIC10, CHCHD3/MIC19, CHCHD6/MIC25, APOO/MIC26, MICOS13/MIC13, APOOL/MIC27 and IMMT/MIC60. The complex associates with mitochondrial outer membrane proteins SAMM50, MTX1 and MTX2, and with HSPA9.

The protein resides in the mitochondrion inner membrane. Component of the MICOS complex, a large protein complex of the mitochondrial inner membrane that plays crucial roles in the maintenance of crista junctions, inner membrane architecture, and formation of contact sites to the outer membrane. Constituent of mature MICOS complex, it is required for the formation of cristae junction (CJ) and maintenance of cristae morphology. Required for the incorporation of MICOS10/MIC10 into the MICOS complex. The chain is MICOS complex subunit MIC13 from Macaca fascicularis (Crab-eating macaque).